The following is a 254-amino-acid chain: 3-deoxy-manno-octulosonate cytidylyltransferase (254 aa).

The protein belongs to the KdsB family.

The protein resides in the cytoplasm. It catalyses the reaction 3-deoxy-alpha-D-manno-oct-2-ulosonate + CTP = CMP-3-deoxy-beta-D-manno-octulosonate + diphosphate. Its pathway is nucleotide-sugar biosynthesis; CMP-3-deoxy-D-manno-octulosonate biosynthesis; CMP-3-deoxy-D-manno-octulosonate from 3-deoxy-D-manno-octulosonate and CTP: step 1/1. The protein operates within bacterial outer membrane biogenesis; lipopolysaccharide biosynthesis. Functionally, activates KDO (a required 8-carbon sugar) for incorporation into bacterial lipopolysaccharide in Gram-negative bacteria. The protein is 3-deoxy-manno-octulosonate cytidylyltransferase of Bordetella pertussis (strain Tohama I / ATCC BAA-589 / NCTC 13251).